The following is a 98-amino-acid chain: NADH-ubiquinone oxidoreductase chain 4L (98 aa).

A run of 3 helical transmembrane segments spans residues 1 to 21, 29 to 49, and 61 to 81; these read MSMV…GLLM, SLLC…ITIM, and IILL…LVMI.

The protein belongs to the complex I subunit 4L family. As to quaternary structure, core subunit of respiratory chain NADH dehydrogenase (Complex I) which is composed of 45 different subunits.

Its subcellular location is the mitochondrion inner membrane. It catalyses the reaction a ubiquinone + NADH + 5 H(+)(in) = a ubiquinol + NAD(+) + 4 H(+)(out). Functionally, core subunit of the mitochondrial membrane respiratory chain NADH dehydrogenase (Complex I) which catalyzes electron transfer from NADH through the respiratory chain, using ubiquinone as an electron acceptor. Part of the enzyme membrane arm which is embedded in the lipid bilayer and involved in proton translocation. The polypeptide is NADH-ubiquinone oxidoreductase chain 4L (MT-ND4L) (Procyon lotor (Raccoon)).